Reading from the N-terminus, the 476-residue chain is Bridging integrator 2 (476 aa).

The BAR domain maps to 26-242; that stretch reads VLQKLGKTVE…MGKLDKQHSS (217 aa). Disordered stretches follow at residues 269-369 and 395-476; these read YPCP…TEGA and GAAP…LTPL. Positions 279–292 are enriched in polar residues; that stretch reads EPSSGAEQTPTSPR. A compositionally biased stretch (pro residues) spans 310–324; it reads PAEPGAPMPGPPPAS. Over residues 325 to 339 the composition is skewed to low complexity; sequence PTSVRSASESESECS. Over residues 340–353 the composition is skewed to basic and acidic residues; that stretch reads GESREIDLSPKEME. A compositionally biased stretch (polar residues) spans 461 to 476; it reads VSCNPPQDPSESLTPL.

The protein resides in the cytoplasm. The polypeptide is Bridging integrator 2 (BIN2) (Gallus gallus (Chicken)).